The chain runs to 456 residues: Transforming growth factor beta-1-induced transcript 1 protein (456 aa).

An N-acetylmethionine modification is found at M1. The disordered stretch occupies residues 1-79; sequence MEDLDALLSD…ATPPFSSSCG (79 aa). The transcription activation stretch occupies residues 1–195; the sequence is MEDLDALLSD…DTPSPPGPTS (195 aa). Positions 1–235 are interaction with PTK2B/PYK2; the sequence is MEDLDALLSD…CNKPIAGQVV (235 aa). The LD motif 1 signature appears at 3–15; that stretch reads DLDALLSDLETTT. T33 is modified (phosphothreonine). Y55 is modified (phosphotyrosine). S63 carries the phosphoserine modification. The interval 78 to 131 is interaction with PTK2/FAK1; sequence CGVLGTGLCELDRLLQELNATQFNITDEIMSQFPSSKETAGEQKEDQSEDKKRP. The LD motif 2 signature appears at 87 to 99; that stretch reads ELDRLLQELNATQ. The interval 109 to 146 is disordered; it reads QFPSSKETAGEQKEDQSEDKKRPSPPPSPSPVLPKPSA. The span at 116–130 shows a compositional bias: basic and acidic residues; that stretch reads TAGEQKEDQSEDKKR. Phosphoserine is present on residues S132, S136, S138, S159, S181, and S189. The segment covering 132–142 has biased composition (pro residues); sequence SPPPSPSPVLP. An LD motif 3 motif is present at residues 152–163; the sequence is ELDRLMASLSDF. The disordered stretch occupies residues 166-200; that stretch reads QNHLPASGPTPPPVPSSMSEDTPSPPGPTSKGSLD. The LD motif 4 signature appears at 198-210; it reads SLDTMLGLLQSDL. LIM zinc-binding domains follow at residues 221–280, 281–338, 339–398, and 399–456; these read GLCG…RFSP, RCGL…QLFA, PRCQ…RRGS, and LCAT…KLFG. Phosphoserine is present on S398. At T402 the chain carries Phosphothreonine.

The protein belongs to the paxillin family. Homooligomer. Interacts with CRIP2, HSPB1, ILK, LIMS1, LIMS2, NCK2, NUDT16L1, PAK, PPARG, PTPN12, TCF3, TCF7L2 and VCL. Forms a complex with GIT1 and ARHGEF7. Interacts with AR/androgen receptor in a ligand-dependent manner. Interacts with CSK, LYN, MAPK15, NR3C1, PPARG, PTK2/FAK1, PTK2B/PYK2, SLC6A3, SLC6A4, SMAD3, SRC and talin. Interacts (via LIM zinc-binding domain 2) with CBLC (via RING-type zinc finger); the interaction is direct and enhances CBLC E3 ubiquitin-protein ligase activity. Phosphorylated by gonadotropin-releasing hormone-activated SRC.

The protein localises to the cell junction. Its subcellular location is the focal adhesion. It localises to the nucleus matrix. The protein resides in the cytoplasm. It is found in the cytoskeleton. Its function is as follows. Functions as a molecular adapter coordinating multiple protein-protein interactions at the focal adhesion complex and in the nucleus. Links various intracellular signaling modules to plasma membrane receptors and regulates the Wnt and TGFB signaling pathways. May also regulate SLC6A3 and SLC6A4 targeting to the plasma membrane hence regulating their activity. In the nucleus, functions as a nuclear receptor coactivator regulating glucocorticoid, androgen, mineralocorticoid and progesterone receptor transcriptional activity. May play a role in the processes of cell growth, proliferation, migration, differentiation and senescence. May have a zinc-dependent DNA-binding activity. This is Transforming growth factor beta-1-induced transcript 1 protein (TGFB1I1) from Bos taurus (Bovine).